A 199-amino-acid chain; its full sequence is uncharacterized protein (199 aa).

Transmembrane regions (helical) follow at residues 27–47 (LIKI…PILA), 55–75 (LLTL…VAAL), and 172–192 (LLLL…VLLL).

The protein localises to the cell membrane. This is an uncharacterized protein from Synechocystis sp. (strain ATCC 27184 / PCC 6803 / Kazusa).